A 101-amino-acid chain; its full sequence is Interleukin-8 (101 aa).

The signal sequence occupies residues Met1 to Ala22. A Citrulline modification is found at Arg27. 2 disulfides stabilise this stretch: Cys34-Cys61 and Cys36-Cys77.

This sequence belongs to the intercrine alpha (chemokine CxC) family. As to quaternary structure, homodimer. Interacts with TNFAIP6 (via Link domain); this interaction interferes with chemokine binding to glycosaminoglycans. Citrullination at Arg-27 prevents proteolysis, and dampens tissue inflammation, it also enhances leukocytosis, possibly through impaired chemokine clearance from the blood circulation.

The protein localises to the secreted. Functionally, chemotactic factor that mediates inflammatory response by attracting neutrophils, basophils, and T-cells to clear pathogens and protect the host from infection. Also plays an important role in neutrophil activation. Released in response to an inflammatory stimulus, exerts its effect by binding to the G-protein-coupled receptors CXCR1 and CXCR2, primarily found in neutrophils, monocytes and endothelial cells. G-protein heterotrimer (alpha, beta, gamma subunits) constitutively binds to CXCR1/CXCR2 receptor and activation by IL8 leads to beta and gamma subunits release from Galpha (GNAI2 in neutrophils) and activation of several downstream signaling pathways including PI3K and MAPK pathways. The protein is Interleukin-8 (CXCL8) of Felis catus (Cat).